Here is a 199-residue protein sequence, read N- to C-terminus: Ribosome maturation factor RimP (199 aa).

Residues 165-199 (AGNLPPQPEDDEDMLADFEIDESEDEEDPETGDVQ) form a disordered region. The segment covering 172-199 (PEDDEDMLADFEIDESEDEEDPETGDVQ) has biased composition (acidic residues).

The protein belongs to the RimP family.

It localises to the cytoplasm. Required for maturation of 30S ribosomal subunits. The chain is Ribosome maturation factor RimP from Hyphomonas neptunium (strain ATCC 15444).